A 252-amino-acid polypeptide reads, in one-letter code: NAC domain-containing protein 83 (252 aa).

Positions 14-160 (LPPGFRFHPT…NWVLCRIFLK (147 aa)) constitute an NAC domain. The DNA-binding element occupies 110–166 (VGLKKTLVFYKGKPPHGSRTDWIMHEYRLSSSPPSSMGPTQNWVLCRIFLKKRAGNK). 2 disordered regions span residues 165–194 (NKND…IITT) and 217–252 (LNLL…NSFR). Low complexity-rich tracts occupy residues 180–194 (NNNN…IITT) and 219–252 (LLPS…NSFR). The PEST-like stretch occupies residues 213–226 (RTTDLNLLPSSPSS).

In terms of assembly, interacts with NAC007/VND4, NAC026/VND5 and NAC030/VND7. Interacts with the mungbean yellow mosaic virus (MYMV) AC1 replication-associated protein. Expressed in xylem and phloem cells in roots and inflorescence stems. Highly expressed in senescent leaves. Expressed in roots, and abscission and dehiscence tissues, such as axils of bracts and abscission zones in cauline leaves and siliques.

It localises to the nucleus. Transcriptional repressor that negatively regulates the expression of genes involved in xylem vessel formation. Represses the transcriptional activation activity of NAC030/VND7, which regulates protoxylem vessel differentiation by promoting immature xylem vessel-specific genes expression. Transcriptional activator that regulates the COLD-REGULATED (COR15A and COR15B) and RESPONSIVE TO DEHYDRATION (LTI78/RD29A and LTI65/RD29B) genes by binding directly to their promoters. Mediates signaling crosstalk between salt stress response and leaf aging process. May play a role in DNA replication of mungbean yellow mosaic virus. The sequence is that of NAC domain-containing protein 83 from Arabidopsis thaliana (Mouse-ear cress).